The sequence spans 325 residues: Heat-inducible transcription repressor HrcA (325 aa).

Belongs to the HrcA family.

Its function is as follows. Negative regulator of class I heat shock genes (grpE-dnaK-dnaJ and groELS operons). Prevents heat-shock induction of these operons. The chain is Heat-inducible transcription repressor HrcA from Staphylococcus aureus (strain bovine RF122 / ET3-1).